Consider the following 371-residue polypeptide: Probable cysteine protease RDL5 (371 aa).

The signal sequence occupies residues M1 to A23. Positions M24–V143 are cleaved as a propeptide — activation peptide. The N-linked (GlcNAc...) asparagine glycan is linked to N94. 3 disulfide bridges follow: C165-C206, C199-C239, and C298-C349. C168 is a catalytic residue. Residues H304 and N324 contribute to the active site.

Belongs to the peptidase C1 family. As to expression, expressed in roots, inflorescences and siliques.

Functionally, possesses protease activity in vitro. The polypeptide is Probable cysteine protease RDL5 (Arabidopsis thaliana (Mouse-ear cress)).